Reading from the N-terminus, the 299-residue chain is HTH-type transcriptional regulator PgrR (299 aa).

The HTH lysR-type domain maps to 4 to 61 (EEIADLMAFVVVAEERSFTRAAARLSMAQSALSQIVRRIEERLGLRLLTRTTRSVVPT). Residues 21 to 40 (FTRAAARLSMAQSALSQIVR) constitute a DNA-binding region (H-T-H motif).

It belongs to the LysR transcriptional regulatory family.

In terms of biological role, regulates the expression of genes involved in peptidoglycan (PG) degradation. Could play a role in switch control between recycling and degradation of PG peptides. Negatively regulates the expression of the ycjY-ymjD-ymjC-mpaA operon by binding to the PgrR-box. In addition, other genes are predicted to be under the control of PgrR, including genes related to membrane formation and function. The polypeptide is HTH-type transcriptional regulator PgrR (pgrR) (Escherichia coli (strain K12)).